We begin with the raw amino-acid sequence, 112 residues long: MASPQELACVYAALILQDDEVAITGDKIATLLKAANIEFEPFWPGLFAKALEGVDVKNLITSVSSGASAGPAQAAAAAPAGGAPAAAAPAESKEGRRSQGESDDDMGFGLLD.

A compositionally biased stretch (low complexity) spans 71 to 90; the sequence is PAQAAAAAPAGGAPAAAAPA. A disordered region spans residues 71 to 112; that stretch reads PAQAAAAAPAGGAPAAAAPAESKEGRRSQGESDDDMGFGLLD. Over residues 91-100 the composition is skewed to basic and acidic residues; it reads ESKEGRRSQG.

Belongs to the eukaryotic ribosomal protein P1/P2 family. In terms of assembly, P1 and P2 exist as dimers at the large ribosomal subunit.

Plays an important role in the elongation step of protein synthesis. This is Large ribosomal subunit protein P1 (rpl-21) from Oscheius tipulae.